An 85-amino-acid chain; its full sequence is MQMIYNSPNYCVVEFPPQDGHHAMNSGGYEIVDKNAQREIFIDGELAARFREHVKQLIQAEPSLDEVDEFLGQFDSLMTQPVVLH.

The protein is Protein BTH_I0359 of Burkholderia thailandensis (strain ATCC 700388 / DSM 13276 / CCUG 48851 / CIP 106301 / E264).